The following is a 264-amino-acid chain: tRNA pseudouridine synthase A (264 aa).

Residue Asp51 is the Nucleophile of the active site. Tyr109 lines the substrate pocket.

The protein belongs to the tRNA pseudouridine synthase TruA family. As to quaternary structure, homodimer.

The enzyme catalyses uridine(38/39/40) in tRNA = pseudouridine(38/39/40) in tRNA. Formation of pseudouridine at positions 38, 39 and 40 in the anticodon stem and loop of transfer RNAs. The sequence is that of tRNA pseudouridine synthase A from Photorhabdus laumondii subsp. laumondii (strain DSM 15139 / CIP 105565 / TT01) (Photorhabdus luminescens subsp. laumondii).